A 115-amino-acid chain; its full sequence is NAD(P)H-quinone oxidoreductase subunit M (115 aa).

This sequence belongs to the complex I NdhM subunit family. As to quaternary structure, NDH-1 can be composed of about 15 different subunits; different subcomplexes with different compositions have been identified which probably have different functions.

Its subcellular location is the cellular thylakoid membrane. It catalyses the reaction a plastoquinone + NADH + (n+1) H(+)(in) = a plastoquinol + NAD(+) + n H(+)(out). It carries out the reaction a plastoquinone + NADPH + (n+1) H(+)(in) = a plastoquinol + NADP(+) + n H(+)(out). Its function is as follows. NDH-1 shuttles electrons from an unknown electron donor, via FMN and iron-sulfur (Fe-S) centers, to quinones in the respiratory and/or the photosynthetic chain. The immediate electron acceptor for the enzyme in this species is believed to be plastoquinone. Couples the redox reaction to proton translocation, and thus conserves the redox energy in a proton gradient. Cyanobacterial NDH-1 also plays a role in inorganic carbon-concentration. The sequence is that of NAD(P)H-quinone oxidoreductase subunit M from Prochlorococcus marinus (strain AS9601).